The sequence spans 336 residues: Fructose-1,6-bisphosphatase class 1 (336 aa).

Glu-92, Asp-115, Leu-117, and Asp-118 together coordinate Mg(2+). Substrate is bound by residues 118 to 121 (DGSS), Asn-211, Tyr-244, 262 to 264 (YLY), and Lys-274. Glu-280 lines the Mg(2+) pocket.

Belongs to the FBPase class 1 family. As to quaternary structure, homotetramer. Mg(2+) is required as a cofactor.

Its subcellular location is the cytoplasm. It catalyses the reaction beta-D-fructose 1,6-bisphosphate + H2O = beta-D-fructose 6-phosphate + phosphate. The protein operates within carbohydrate biosynthesis; gluconeogenesis. In Vibrio cholerae serotype O1 (strain ATCC 39541 / Classical Ogawa 395 / O395), this protein is Fructose-1,6-bisphosphatase class 1.